Here is a 190-residue protein sequence, read N- to C-terminus: uncharacterized protein (190 aa).

To Synechocystis PCC 6803 sll1609 and slr1290.

This is an uncharacterized protein from Synechocystis sp. (strain ATCC 27184 / PCC 6803 / Kazusa).